The following is a 302-amino-acid chain: Ornithine carbamoyltransferase (302 aa).

Carbamoyl phosphate-binding positions include 52 to 55 (STRT), Gln-79, Arg-103, and 130 to 133 (HPCQ). Residues Asn-161, Asp-221, and 225 to 226 (SM) contribute to the L-ornithine site. Carbamoyl phosphate is bound by residues 261–262 (CL) and Arg-289.

The protein belongs to the aspartate/ornithine carbamoyltransferase superfamily. OTCase family.

It localises to the cytoplasm. The enzyme catalyses carbamoyl phosphate + L-ornithine = L-citrulline + phosphate + H(+). It functions in the pathway amino-acid biosynthesis; L-arginine biosynthesis; L-arginine from L-ornithine and carbamoyl phosphate: step 1/3. Its function is as follows. Reversibly catalyzes the transfer of the carbamoyl group from carbamoyl phosphate (CP) to the N(epsilon) atom of ornithine (ORN) to produce L-citrulline. This chain is Ornithine carbamoyltransferase, found in Methanospirillum hungatei JF-1 (strain ATCC 27890 / DSM 864 / NBRC 100397 / JF-1).